The sequence spans 49 residues: Peridinin-chlorophyll a-binding protein (49 aa).

As to quaternary structure, monomer. Binds 12 peridinin and 2 chlorophyll a molecules per monomer.

The protein resides in the plastid. It localises to the chloroplast. Its function is as follows. Water-soluble antenna for capture of solar energy in the blue-green range. Peridinin is an asymmetric carotenoid. In Alexandrium cohorticula (Dinoflagellate), this protein is Peridinin-chlorophyll a-binding protein.